The following is a 337-amino-acid chain: Probable RuBisCO transcriptional regulator (337 aa).

The HTH lysR-type domain occupies 6-63; it reads FTLDQLRILKAIAVEGSFKRAADSLYVSQPAVSLQVQNLERQLDVPLFDRGGRRAQLT. The H-T-H motif DNA-binding region spans 23–42; the sequence is FKRAADSLYVSQPAVSLQVQ.

This sequence belongs to the LysR transcriptional regulatory family.

Trans-acting transcriptional regulator of RuBisCO genes (rbcL and rbcS) expression. In Trichormus variabilis (strain ATCC 29413 / PCC 7937) (Anabaena variabilis), this protein is Probable RuBisCO transcriptional regulator (rbcR).